The following is a 242-amino-acid chain: MAKVSMRDMLQAGVHFGHQTRYWNPKMKSYIFGARSKVHIINLEKTVPMFDDAMNFISSVAAKKGKVLFVGTKRAASEAVKEAAERCDQFYVNHRWLGGMLTNWKTVRQSIKRLKDLETQSQDGTFDKLTKKEALMRTREMEKLEKSLGGIKNMGGLPDVLFVVDADHEHIAIKEANNLGIPVVSIVDTNSNPDGVDYVIPGNDDAIRAVQLYLNAAADTVLEARAQDIVVQAEQDGFVEAE.

It belongs to the universal ribosomal protein uS2 family.

This is Small ribosomal subunit protein uS2 from Aeromonas hydrophila subsp. hydrophila (strain ATCC 7966 / DSM 30187 / BCRC 13018 / CCUG 14551 / JCM 1027 / KCTC 2358 / NCIMB 9240 / NCTC 8049).